The primary structure comprises 264 residues: MIYGILSHVPKIFFKPAYDLYERYLLEKVKAGVLPKHVAIIMDGNRRWAKKREKPPWYGHLFGSKKLEEILEWCHELGIRILTVYAFSTENFKRSKEEVERLMQLFEQKFRELVTDKRVHEYGVRVNVIGRKELLPKSVRDAAEEAERATRKYNNYVLNVAIAYGGRSEIVDAVKDIVRDVMDGKLRVEDIDEELLKKYLYVPNMPDPDIVIRTGGEVRISNFLLYQIAYSELFFVDVYFPEFRKIDFLRIIREFQKRERRFGR.

Asp43 is a catalytic residue. Asp43 is a Mg(2+) binding site. Substrate contacts are provided by residues 44–47 (GNRR), Trp48, His60, and 88–90 (STE). Asn91 functions as the Proton acceptor in the catalytic mechanism. Residues Phe92, Arg94, Arg213, and 219–221 (RIS) each bind substrate. Glu232 lines the Mg(2+) pocket.

Belongs to the UPP synthase family. Homodimer. Requires Mg(2+) as cofactor.

The enzyme catalyses geranylgeranyl diphosphate + 7 isopentenyl diphosphate = tri-trans,hepta-cis-undecaprenyl diphosphate + 7 diphosphate. Catalyzes the sequential condensation of isopentenyl diphosphate (IPP) with geranylgeranyl diphosphate (GGPP) to yield (2Z,6Z,10Z,14Z,18Z,22Z,26Z,30E,34E,38E)-undecaprenyl diphosphate (tritrans,heptacis-UPP). It is probably the precursor of glycosyl carrier lipids. This chain is Tritrans,polycis-undecaprenyl-diphosphate synthase (geranylgeranyl-diphosphate specific), found in Pyrococcus abyssi (strain GE5 / Orsay).